Here is a 712-residue protein sequence, read N- to C-terminus: Anaerobic ribonucleoside-triphosphate reductase (712 aa).

One can recognise an ATP-cone domain in the interval 3–92 (PHVMKRDGCK…EYRHDRDIER (90 aa)). The region spanning 583-708 (KKVNPYDKID…VKRRVKHLGN (126 aa)) is the Glycine radical domain. Cysteine 644, cysteine 647, cysteine 662, and cysteine 665 together coordinate Zn(2+). Glycine 681 carries the glycine radical modification.

This sequence belongs to the anaerobic ribonucleoside-triphosphate reductase family. Homodimer. Forms a tetramer composed of two NrdD and two NrdG subunits.

It catalyses the reaction a ribonucleoside 5'-triphosphate + formate + H(+) = a 2'-deoxyribonucleoside 5'-triphosphate + CO2 + H2O. The enzyme catalyses formate + ATP + H(+) = dATP + CO2 + H2O. It carries out the reaction CTP + formate + H(+) = dCTP + CO2 + H2O. The catalysed reaction is GTP + formate + H(+) = dGTP + CO2 + H2O. It catalyses the reaction UTP + formate + H(+) = dUTP + CO2 + H2O. With respect to regulation, activated under anaerobic conditions by NrdG, a tightly associated activase. Activation involves the formation of a glycyl radical at Gly-681. Exposure of the activated reductase to oxygen leads to C-terminal truncation and inactivation of the protein, by cleavage at the N-terminal side of Gly-681. The presence of zinc protects the protein from proteolysis and prevents the formation of disulfide bridges within it. The enzyme shows a basal activity in the absence of any effector, but reduction is stimulated up to 10-fold by an appropriate modulator (dGTP for ATP reduction, ATP for CTP and UTP reduction, and dTTP for GTP reduction). dGTP and dTTP inhibit the reduction of the incorrect substrate, and dATP inhibits reduction of all four. These modulators act as allosteric effectors. In terms of biological role, catalyzes the conversion of ribonucleotides into deoxyribonucleotides, which are required for DNA synthesis and repair. Can reduce each of the four common ribonucleoside triphosphates. The sequence is that of Anaerobic ribonucleoside-triphosphate reductase from Escherichia coli (strain K12).